The chain runs to 622 residues: Chaperone protein HtpG (622 aa).

Residues 1 to 334 (MKGQETRGFQ…SNDLPLNVSR (334 aa)) are a; substrate-binding. The tract at residues 335–550 (EILQDSRITQ…ADEMSTQMAK (216 aa)) is b. A c region spans residues 551–622 (LFAAAGQQAP…IRRMNQLLTA (72 aa)).

Belongs to the heat shock protein 90 family. In terms of assembly, homodimer.

The protein resides in the cytoplasm. Its function is as follows. Molecular chaperone. Has ATPase activity. The polypeptide is Chaperone protein HtpG (Yersinia pestis).